A 744-amino-acid chain; its full sequence is Cullin-3 (744 aa).

The Cullin neddylation domain maps to 677–736 (MELSAIIVRIMKTEGKLSHQQLLERTTKRTQSRLSLTPSILKRSIQLLIEKEYIQRNADD). A Glycyl lysine isopeptide (Lys-Gly) (interchain with G-Cter in NEDD8) cross-link involves residue Lys-688.

This sequence belongs to the cullin family. In terms of assembly, component of a ubiquitin-protein ligase complex consisting of the cullin CUL3, the linker protein ELC1, the substrate receptor ELA1, and the RING protein HRT1. Post-translationally, neddylated; enhancing the ubiquitin-ligase activity.

The protein operates within protein modification; protein ubiquitination. Its function is as follows. As part of the CRL3 E3 ubiquitin ligase complex; polyubiquitylates monoubiquitylated RNA polymerase II subunit RPO21 to trigger its proteolysis; plays a role in global genomic repair. In Saccharomyces cerevisiae (strain ATCC 204508 / S288c) (Baker's yeast), this protein is Cullin-3 (CUL3).